Here is a 191-residue protein sequence, read N- to C-terminus: Probable GTP-binding protein EngB (191 aa).

Residues 13-189 (DRLEVAFAGR…RAEIVALLPD (177 aa)) enclose the EngB-type G domain. GTP is bound by residues 21 to 28 (GRSNVGKS), 48 to 52 (GRTRE), 67 to 70 (DLPG), 134 to 137 (TKTD), and 168 to 170 (TSS). Mg(2+)-binding residues include Ser28 and Thr50.

It belongs to the TRAFAC class TrmE-Era-EngA-EngB-Septin-like GTPase superfamily. EngB GTPase family. The cofactor is Mg(2+).

Necessary for normal cell division and for the maintenance of normal septation. This chain is Probable GTP-binding protein EngB, found in Maricaulis maris (strain MCS10) (Caulobacter maris).